Reading from the N-terminus, the 318-residue chain is NADH-ubiquinone oxidoreductase chain 1 (318 aa).

8 helical membrane-spanning segments follow: residues 2–22, 69–89, 102–122, 146–166, 171–191, 222–242, 253–273, and 294–314; these read FLINVLTVTLPILLAVAFLTL, FLFTIAPILALTLALTVWAPL, LLFILAMSSLMVYSILWSGWA, MTTIILSMVLMNGSFTLTAFA, HLWLIFPMWPLMMMWFTSTLA, LFFMAEYANIIMMNALTVILF, EISTINFVVKTMILTICFLWV, and LPLTLALCMWHISILISLACI.

It belongs to the complex I subunit 1 family.

It localises to the mitochondrion inner membrane. The enzyme catalyses a ubiquinone + NADH + 5 H(+)(in) = a ubiquinol + NAD(+) + 4 H(+)(out). Its function is as follows. Core subunit of the mitochondrial membrane respiratory chain NADH dehydrogenase (Complex I) that is believed to belong to the minimal assembly required for catalysis. Complex I functions in the transfer of electrons from NADH to the respiratory chain. The immediate electron acceptor for the enzyme is believed to be ubiquinone. The chain is NADH-ubiquinone oxidoreductase chain 1 (MT-ND1) from Mammuthus primigenius (Siberian woolly mammoth).